Consider the following 252-residue polypeptide: Triosephosphate isomerase (252 aa).

10–12 (NWK) is a substrate binding site. Residue H96 is the Electrophile of the active site. Catalysis depends on E168, which acts as the Proton acceptor. Residues G174, S214, and 235-236 (GG) each bind substrate.

It belongs to the triosephosphate isomerase family. In terms of assembly, homodimer.

It is found in the cytoplasm. The enzyme catalyses D-glyceraldehyde 3-phosphate = dihydroxyacetone phosphate. The protein operates within carbohydrate biosynthesis; gluconeogenesis. It functions in the pathway carbohydrate degradation; glycolysis; D-glyceraldehyde 3-phosphate from glycerone phosphate: step 1/1. Its function is as follows. Involved in the gluconeogenesis. Catalyzes stereospecifically the conversion of dihydroxyacetone phosphate (DHAP) to D-glyceraldehyde-3-phosphate (G3P). This Streptococcus pyogenes serotype M6 (strain ATCC BAA-946 / MGAS10394) protein is Triosephosphate isomerase.